Consider the following 58-residue polypeptide: Small integral membrane protein 11 (58 aa).

Residues 9-29 (FPLLLYILAAKTLILCLAFAG) form a helical membrane-spanning segment. Positions 29 to 58 (GVKVYQRKRLEAKQQKVEAEKRKQAEKKES) form a coiled coil.

Its subcellular location is the membrane. The sequence is that of Small integral membrane protein 11 (SMIM11) from Bos taurus (Bovine).